Here is a 280-residue protein sequence, read N- to C-terminus: Putative transcription factor kapC (280 aa).

Positions 1-102 are disordered; sequence MQPALAPHPS…GKRPLSTSKR (102 aa). Over residues 39–49 the composition is skewed to pro residues; the sequence is PQPPAPQPPHM. A compositionally biased stretch (polar residues) spans 79–89; it reads TQPDVTGQETP. Residues 96 to 159 form the bZIP domain; that stretch reads PLSTSKRAAQ…EYIINLQSRL (64 aa). Residues 97–120 are basic motif; that stretch reads LSTSKRAAQNRAAQRAFRQRKEAH. Residues 124 to 155 form a leucine-zipper region; it reads LEGKVKAYESMGEAIKALQAENYQLREYIINL. The segment at 169–280 is disordered; that stretch reads LPGNIDLSQP…EQTHGLPLIS (112 aa). Positions 197–206 are enriched in pro residues; that stretch reads APPPTAPQQP.

It belongs to the bZIP family.

It is found in the nucleus. Putative transcription factor. This is Putative transcription factor kapC (kapC) from Aspergillus fumigatus (strain ATCC MYA-4609 / CBS 101355 / FGSC A1100 / Af293) (Neosartorya fumigata).